The primary structure comprises 538 residues: Phosphoenolpyruvate carboxykinase (ATP) (538 aa).

3 residues coordinate substrate: R64, Y205, and K211. Residues K211, H230, and 246-254 (GLSGTGKTT) contribute to the ATP site. K211 and H230 together coordinate Mn(2+). D267 serves as a coordination point for Mn(2+). ATP-binding positions include E295, R331, 447-448 (RI), and T453. R331 contacts substrate.

The protein belongs to the phosphoenolpyruvate carboxykinase (ATP) family. As to quaternary structure, monomer. It depends on Mn(2+) as a cofactor.

It localises to the cytoplasm. It carries out the reaction oxaloacetate + ATP = phosphoenolpyruvate + ADP + CO2. Its pathway is carbohydrate biosynthesis; gluconeogenesis. Its function is as follows. Involved in the gluconeogenesis. Catalyzes the conversion of oxaloacetate (OAA) to phosphoenolpyruvate (PEP) through direct phosphoryl transfer between the nucleoside triphosphate and OAA. In Histophilus somni (strain 129Pt) (Haemophilus somnus), this protein is Phosphoenolpyruvate carboxykinase (ATP).